Here is a 179-residue protein sequence, read N- to C-terminus: Large ribosomal subunit protein uL6 (179 aa).

Belongs to the universal ribosomal protein uL6 family. Part of the 50S ribosomal subunit.

Functionally, this protein binds to the 23S rRNA, and is important in its secondary structure. It is located near the subunit interface in the base of the L7/L12 stalk, and near the tRNA binding site of the peptidyltransferase center. The sequence is that of Large ribosomal subunit protein uL6 from Chlorobaculum tepidum (strain ATCC 49652 / DSM 12025 / NBRC 103806 / TLS) (Chlorobium tepidum).